Consider the following 141-residue polypeptide: Large ribosomal subunit protein uL11 (141 aa).

Belongs to the universal ribosomal protein uL11 family. As to quaternary structure, part of the ribosomal stalk of the 50S ribosomal subunit. Interacts with L10 and the large rRNA to form the base of the stalk. L10 forms an elongated spine to which L12 dimers bind in a sequential fashion forming a multimeric L10(L12)X complex. One or more lysine residues are methylated.

In terms of biological role, forms part of the ribosomal stalk which helps the ribosome interact with GTP-bound translation factors. The polypeptide is Large ribosomal subunit protein uL11 (Alkaliphilus oremlandii (strain OhILAs) (Clostridium oremlandii (strain OhILAs))).